We begin with the raw amino-acid sequence, 394 residues long: MSKEKFERTKPHVNVGTIGHVDHGKTTLTAAITTVLSKHFGGAARAFDQIDNAPEEKARGITINTSHVEYDTETRHYAHVDCPGHADYVKNMITGAAQMDGAILVVAATDGPMPQTREHILLGRQVGVPYIIVFLNKCDMVDDEELLELVEMEVRELLSQYDFPGDDTPIVRGSALQALNGVPEWEEKILELAHHLDTYIPEPERAIDKPFLLPIEDVFSISGRGTVVTGRVERGIIKSGEEVEIVGIKETTKTTVTGVEMFRKLLDEGRAGENVGALLRGTKREEIERGQVLAKPGTITPHTDFESEVYVLSKEEGGRHTPFFKGYRPQFYFRTTDVTGTIELPEGVEMVMPGDNIKMTVSLIHPIAMDEGLRFAIREGGRTVGAGVVAKIIK.

Residues 10-204 enclose the tr-type G domain; sequence KPHVNVGTIG…HLDTYIPEPE (195 aa). Positions 19 to 26 are G1; that stretch reads GHVDHGKT. Residue 19–26 coordinates GTP; sequence GHVDHGKT. Threonine 26 serves as a coordination point for Mg(2+). The tract at residues 60 to 64 is G2; that stretch reads GITIN. Positions 81–84 are G3; the sequence is DCPG. Residues 81 to 85 and 136 to 139 contribute to the GTP site; these read DCPGH and NKCD. Residues 136–139 form a G4 region; that stretch reads NKCD. Positions 174–176 are G5; sequence SAL.

It belongs to the TRAFAC class translation factor GTPase superfamily. Classic translation factor GTPase family. EF-Tu/EF-1A subfamily. Monomer.

Its subcellular location is the cytoplasm. The enzyme catalyses GTP + H2O = GDP + phosphate + H(+). GTP hydrolase that promotes the GTP-dependent binding of aminoacyl-tRNA to the A-site of ribosomes during protein biosynthesis. The sequence is that of Elongation factor Tu from Actinobacillus pleuropneumoniae serotype 5b (strain L20).